The sequence spans 284 residues: 4-hydroxy-3-methylbut-2-enyl diphosphate reductase (284 aa).

Residue Cys-12 participates in [4Fe-4S] cluster binding. Positions 40 and 76 each coordinate (2E)-4-hydroxy-3-methylbut-2-enyl diphosphate. Residues His-40 and His-76 each contribute to the dimethylallyl diphosphate site. 2 residues coordinate isopentenyl diphosphate: His-40 and His-76. A [4Fe-4S] cluster-binding site is contributed by Cys-98. His-126 serves as a coordination point for (2E)-4-hydroxy-3-methylbut-2-enyl diphosphate. Position 126 (His-126) interacts with dimethylallyl diphosphate. His-126 contacts isopentenyl diphosphate. The active-site Proton donor is the Glu-128. (2E)-4-hydroxy-3-methylbut-2-enyl diphosphate is bound at residue Thr-161. Position 191 (Cys-191) interacts with [4Fe-4S] cluster. Residues Ser-219, Ser-220, Asn-221, and Ser-263 each coordinate (2E)-4-hydroxy-3-methylbut-2-enyl diphosphate. Residues Ser-219, Ser-220, Asn-221, and Ser-263 each coordinate dimethylallyl diphosphate. Isopentenyl diphosphate-binding residues include Ser-219, Ser-220, Asn-221, and Ser-263.

It belongs to the IspH family. It depends on [4Fe-4S] cluster as a cofactor.

It carries out the reaction isopentenyl diphosphate + 2 oxidized [2Fe-2S]-[ferredoxin] + H2O = (2E)-4-hydroxy-3-methylbut-2-enyl diphosphate + 2 reduced [2Fe-2S]-[ferredoxin] + 2 H(+). The catalysed reaction is dimethylallyl diphosphate + 2 oxidized [2Fe-2S]-[ferredoxin] + H2O = (2E)-4-hydroxy-3-methylbut-2-enyl diphosphate + 2 reduced [2Fe-2S]-[ferredoxin] + 2 H(+). Its pathway is isoprenoid biosynthesis; dimethylallyl diphosphate biosynthesis; dimethylallyl diphosphate from (2E)-4-hydroxy-3-methylbutenyl diphosphate: step 1/1. It participates in isoprenoid biosynthesis; isopentenyl diphosphate biosynthesis via DXP pathway; isopentenyl diphosphate from 1-deoxy-D-xylulose 5-phosphate: step 6/6. Catalyzes the conversion of 1-hydroxy-2-methyl-2-(E)-butenyl 4-diphosphate (HMBPP) into a mixture of isopentenyl diphosphate (IPP) and dimethylallyl diphosphate (DMAPP). Acts in the terminal step of the DOXP/MEP pathway for isoprenoid precursor biosynthesis. This Petrotoga mobilis (strain DSM 10674 / SJ95) protein is 4-hydroxy-3-methylbut-2-enyl diphosphate reductase.